The following is a 246-amino-acid chain: Putative outer membrane protein YiaT (246 aa).

Positions 1-21 are cleaved as a signal peptide; the sequence is MLINRNIVALFALPFMASATA.

It belongs to the MipA/OmpV family.

The protein resides in the cell outer membrane. The chain is Putative outer membrane protein YiaT (yiaT) from Escherichia coli O157:H7.